The chain runs to 162 residues: Caveolin-2 (162 aa).

The Cytoplasmic portion of the chain corresponds to M1–K86. At Y19 the chain carries Phosphotyrosine; by SRC. A phosphoserine mark is found at S20 and S23. Y27 bears the Phosphotyrosine; by SRC mark. Phosphoserine is present on S36. An intramembrane region (helical) is located at residues F87–L107. Residues S108–D162 are Cytoplasmic-facing.

Belongs to the caveolin family. As to quaternary structure, monomer or homodimer. Interacts with CAV1; the interaction forms a stable heterooligomeric complex that is required for targeting to lipid rafts and for caveolae formation. Tyrosine phosphorylated forms do not form heterooligomers with the Tyr-19-phosphorylated form existing as a monomer or dimer, and the Tyr-27-form as a monomer only. Interacts (tyrosine phosphorylated form) with the SH2 domain-containing proteins, RASA1, NCK1 and SRC. Interacts (tyrosine phosphorylated form) with INSR, the interaction (Tyr-27-phosphorylated form) is increased on insulin stimulation. Interacts (Tyr-19 phosphorylated form) with MAPK1 (phosphorylated form); the interaction, promoted by insulin, leads to nuclear location and MAPK1 activation. Interacts with STAT3; the interaction is increased on insulin-induced tyrosine phosphorylation leading to STAT activation. In terms of processing, phosphorylated on serine and tyrosine residues. CAV1 promotes phosphorylation on Ser-23 which then targets the complex to the plasma membrane, lipid rafts and caveolae. Phosphorylation on Ser-36 appears to modulate mitosis in endothelial cells. Phosphorylation on both Tyr-19 and Tyr-27 is required for insulin-induced 'Ser-727' phosphorylation of STAT3 and its activation. Phosphorylation on Tyr-19 is required for insulin-induced phosphorylation of MAPK1 and DNA binding of STAT3. Tyrosine phosphorylation is induced by both EGF and insulin (By. similarity).

It is found in the nucleus. The protein localises to the cytoplasm. Its subcellular location is the golgi apparatus membrane. The protein resides in the cell membrane. It localises to the membrane. It is found in the caveola. In terms of biological role, may act as a scaffolding protein within caveolar membranes. Interacts directly with G-protein alpha subunits and can functionally regulate their activity. Acts as an accessory protein in conjunction with CAV1 in targeting to lipid rafts and driving caveolae formation. The Ser-36 phosphorylated form has a role in modulating mitosis in endothelial cells. Positive regulator of cellular mitogenesis of the MAPK signaling pathway. Required for the insulin-stimulated nuclear translocation and activation of MAPK1 and STAT3, and the subsequent regulation of cell cycle progression. In Pongo abelii (Sumatran orangutan), this protein is Caveolin-2 (CAV2).